The chain runs to 334 residues: Putative peptide import ATP-binding protein BAB2_1053 (334 aa).

An ABC transporter domain is found at 22 to 272; that stretch reads VRTDDLVRDF…PLHPYSRALL (251 aa). Residue 64–71 coordinates ATP; sequence GESGSGKS.

The protein belongs to the ABC transporter superfamily. The complex is composed of two ATP-binding proteins (BAB2_1052 and BAB2_1053), two transmembrane proteins (BAB2_1050 and BAB2_1051) and a solute-binding protein (BAB2_1049).

The protein localises to the cell inner membrane. Functionally, probably part of an ABC transporter complex that could be involved in peptide import. Probably responsible for energy coupling to the transport system. The sequence is that of Putative peptide import ATP-binding protein BAB2_1053 from Brucella abortus (strain 2308).